The sequence spans 118 residues: Actin depolymerizing factor ADF (118 aa).

The ADF-H domain maps to 4–118 (GMGVDENCVA…HEMGDLAPLA (115 aa)).

This sequence belongs to the actin-binding proteins ADF family. In terms of assembly, interacts with ACT1 (G-actin); the interaction results in inhibition of actin polymerization. Interacts with DPA; the interaction enhances ADF activity in disassembly of filamentous actin and inhibition of actin polymerization.

The protein resides in the cytoplasm. Its function is as follows. Inhibits actin polymerization. Promotes actin depolymerization. Strongly sequesters actin monomers (G-actin). Weakly severs actin filaments (F-actin). This chain is Actin depolymerizing factor ADF, found in Toxoplasma gondii.